Here is a 1096-residue protein sequence, read N- to C-terminus: Inactive phospholipase C-like protein 1 (1096 aa).

The segment at 1 to 101 (MAEGAASREA…KKTVSFSSMP (101 aa)) is disordered. A Phosphoserine modification is found at Ser48. Over residues 49–60 (GVALPGAAGVPA) the composition is skewed to low complexity. Ser78 is modified (phosphoserine). An interaction with PPP1C region spans residues 83–222 (PSNQKCGGRK…NIWVSGLRYL (140 aa)). Thr94 carries the phosphothreonine modification. Thr94 carries the post-translational modification Phosphothreonine; by PKA. Position 96 is a phosphoserine; by PKA (Ser96). The region spanning 114–224 (SFMQAGCELK…WVSGLRYLVS (111 aa)) is the PH domain. In terms of domain architecture, PI-PLC X-box spans 399–543 (QDMTQPLSHY…LKNMIIVKGK (145 aa)). Residues 544-568 (KLPSESDLLEGEVTDEDEEAEMSRR) are interaction with GABA A beta subunit. A compositionally biased stretch (acidic residues) spans 550-563 (DLLEGEVTDEDEEA). Residues 550–569 (DLLEGEVTDEDEEAEMSRRM) are disordered. A Phosphothreonine modification is found at Thr557. Ser570 is modified (phosphoserine). A PI-PLC Y-box domain is found at 586-702 (LSDLVSICKS…GYVLRPSIMR (117 aa)). The region spanning 702-831 (RDEVSYFSAN…PGYRHVPLRS (130 aa)) is the C2 domain. Positions 1040 to 1060 (DLLKNAKNEAVENIKQIQLAC) form a coiled coil. The segment at 1067–1096 (KGPGGGSEAKGKRSLEAIEEKESSEENGKL) is disordered. The segment covering 1075-1096 (AKGKRSLEAIEEKESSEENGKL) has biased composition (basic and acidic residues). At Ser1080 the chain carries Phosphoserine.

As to quaternary structure, interacts with PPP2CA, Ins(1,4,5)P3, Ins(1,4,5,6)P4 GABARAP, GABA receptor beta subunits, GABA receptor gamma-2 subunits and PPP1C. May form a ternary complex with GABA receptor beta subunit and GABARAP. The formation of a ternary complex with GABA receptor beta subunit and GABARAP could be the key step for facilitating the association of GABARAP with the GABA receptor gamma-2 subunit and to allow it to be transported at the right destination. Post-translationally, phosphorylated by the catalytic subunit of PKA. Phosphorylation of Thr-94 resulted in dissociation of PPP1C from PRIP1.

It is found in the cytoplasm. Functionally, involved in an inositol phospholipid-based intracellular signaling cascade. Shows no PLC activity to phosphatidylinositol 4,5-bisphosphate and phosphatidylinositol. Component in the phospho-dependent endocytosis process of GABA A receptor. Acts as an inhibitor of PPP1C. Involved in the assembly and/or the trafficking of gamma-2 subunit-containing GABA A receptors. The chain is Inactive phospholipase C-like protein 1 (Plcl1) from Mus musculus (Mouse).